The following is a 156-amino-acid chain: Cytochrome c-type biogenesis protein CcmE 2 (156 aa).

Topologically, residues 1–8 (MNPQRRRR) are cytoplasmic. Residues 9–29 (LWLVLALVLAGGLATTLVAMA) form a helical; Signal-anchor for type II membrane protein membrane-spanning segment. Residues 30–156 (LQRNVAYLYT…AAAGQVGERQ (127 aa)) are Periplasmic-facing. 2 residues coordinate heme: H123 and Y127. The tract at residues 136–156 (MGSAHRKHDVPAAAGQVGERQ) is disordered.

Belongs to the CcmE/CycJ family.

The protein resides in the cell inner membrane. In terms of biological role, heme chaperone required for the biogenesis of c-type cytochromes. Transiently binds heme delivered by CcmC and transfers the heme to apo-cytochromes in a process facilitated by CcmF and CcmH. This Xanthomonas axonopodis pv. citri (strain 306) protein is Cytochrome c-type biogenesis protein CcmE 2.